The following is a 39-amino-acid chain: Photosystem II reaction center protein L (39 aa).

Residues 18–38 (SLYLGLLLVFVTGVLFSSYFF) form a helical membrane-spanning segment.

Belongs to the PsbL family. As to quaternary structure, PSII is composed of 1 copy each of membrane proteins PsbA, PsbB, PsbC, PsbD, PsbE, PsbF, PsbH, PsbI, PsbJ, PsbK, PsbL, PsbM, PsbT, PsbX, PsbY, PsbZ, Psb30/Ycf12, peripheral proteins PsbO, CyanoQ (PsbQ), PsbU, PsbV and a large number of cofactors. It forms dimeric complexes.

Its subcellular location is the cellular thylakoid membrane. In terms of biological role, one of the components of the core complex of photosystem II (PSII). PSII is a light-driven water:plastoquinone oxidoreductase that uses light energy to abstract electrons from H(2)O, generating O(2) and a proton gradient subsequently used for ATP formation. It consists of a core antenna complex that captures photons, and an electron transfer chain that converts photonic excitation into a charge separation. This subunit is found at the monomer-monomer interface and is required for correct PSII assembly and/or dimerization. This Synechococcus sp. (strain RCC307) protein is Photosystem II reaction center protein L.